The chain runs to 207 residues: Large ribosomal subunit protein uL4 (207 aa).

Positions 49–78 (HAVKNRSAVRGGGRKPWRQKGTGRARQGSI) are disordered. Residues 60–71 (GGRKPWRQKGTG) show a composition bias toward basic residues.

This sequence belongs to the universal ribosomal protein uL4 family. Part of the 50S ribosomal subunit.

Functionally, one of the primary rRNA binding proteins, this protein initially binds near the 5'-end of the 23S rRNA. It is important during the early stages of 50S assembly. It makes multiple contacts with different domains of the 23S rRNA in the assembled 50S subunit and ribosome. Its function is as follows. Forms part of the polypeptide exit tunnel. The protein is Large ribosomal subunit protein uL4 of Latilactobacillus sakei subsp. sakei (strain 23K) (Lactobacillus sakei subsp. sakei).